A 695-amino-acid chain; its full sequence is Threonine--tRNA ligase 1, cytoplasmic (695 aa).

The interval 1–21 (MSEEKASSPSGKMDGEKPLNP) is disordered. A TGS domain is found at 51-115 (DSKPIKVTLP…ETDCTLELLK (65 aa)). An N6-acetyllysine modification is found at Lys-215. Thr-218 is subject to Phosphothreonine. Tyr-270 is modified (phosphotyrosine). Thr-425 is subject to Phosphothreonine.

The protein belongs to the class-II aminoacyl-tRNA synthetase family. Homodimer. In terms of processing, ISGylated.

It localises to the cytoplasm. It carries out the reaction tRNA(Thr) + L-threonine + ATP = L-threonyl-tRNA(Thr) + AMP + diphosphate + H(+). In terms of biological role, catalyzes the attachment of threonine to tRNA(Thr) in a two-step reaction: threonine is first activated by ATP to form Thr-AMP and then transferred to the acceptor end of tRNA(Thr). Also edits incorrectly charged tRNA(Thr) via its editing domain, at the post-transfer stage. This Rattus norvegicus (Rat) protein is Threonine--tRNA ligase 1, cytoplasmic (Tars1).